We begin with the raw amino-acid sequence, 1022 residues long: Antigenic heat-stable 120 kDa protein (1022 aa).

2 disordered regions span residues 1-41 and 355-403; these read MSKD…QTTT and GQSK…PQSQ. Basic and acidic residues predominate over residues 19-34; sequence EYTEEQKQTLEQEQKE. Polar residues-rich tracts occupy residues 355–380 and 387–403; these read GQSKEQPLITPQQTTSSSVEPPQYKQ and PTNQPLQPETSQMPQSQ.

The protein resides in the cytoplasm. This Rickettsia conorii (strain ATCC VR-613 / Malish 7) protein is Antigenic heat-stable 120 kDa protein (sca4).